The chain runs to 122 residues: Large ribosomal subunit protein eL34 (122 aa).

It belongs to the eukaryotic ribosomal protein eL34 family.

The sequence is that of Large ribosomal subunit protein eL34 (rpl34) from Dictyostelium discoideum (Social amoeba).